A 1161-amino-acid polypeptide reads, in one-letter code: ATP-dependent helicase/deoxyribonuclease subunit B (1161 aa).

The protein belongs to the helicase family. AddB/RexB type 2 subfamily. Heterodimer of AddA and RexB. Requires Mg(2+) as cofactor.

Functionally, the heterodimer acts as both an ATP-dependent DNA helicase and an ATP-dependent, dual-direction single-stranded exonuclease. Recognizes the chi site generating a DNA molecule suitable for the initiation of homologous recombination. This subunit has 5' -&gt; 3' nuclease activity but not helicase activity. The protein is ATP-dependent helicase/deoxyribonuclease subunit B of Oenococcus oeni (strain ATCC BAA-331 / PSU-1).